The sequence spans 388 residues: MAAFKLADRLATLPPYLFAGIDKVKAEVAARGVDIISLGIGDPDMATPGFIIEAMKEAIARPANHQYPSYVGMLAFRQEVANWYDRRFGVSLDPATEVIGLIGSKEGIAHFPFAFINPGDLVLVCTPNYPVYHIATGFAGGEVQFVPLLEENDFLPDLDAIPEDTWKRAKMIFVNYPNNPTAATAPLGFYEKLVDICRRFDVIIAHDTAYTEIYYDEDNRPPSILSVPGAKDVAIEFHSLSKTYNMTGWRVGMAVGNPTLVAGLGKIKENMDSGIFQAVQEASIVALRDGDDFCRELRGIYRQRRDTVITALHKAGIQCRVPQATFYVWARVPQGHTSADFVTRVLQETGVVVTPGNGFGTPGEGFFRISLTVDNARLEEAVSRIAKL.

Substrate-binding residues include Y16 and G41. Pyridoxal 5'-phosphate is bound by residues Y70, 104–105 (SK), Y129, N179, Y210, and 239–241 (SLS). Substrate-binding residues include K105, Y129, and N179. Position 242 is an N6-(pyridoxal phosphate)lysine (K242). R250 is a binding site for pyridoxal 5'-phosphate. R368 lines the substrate pocket.

The protein belongs to the class-I pyridoxal-phosphate-dependent aminotransferase family. LL-diaminopimelate aminotransferase subfamily. Homodimer. The cofactor is pyridoxal 5'-phosphate.

It carries out the reaction (2S,6S)-2,6-diaminopimelate + 2-oxoglutarate = (S)-2,3,4,5-tetrahydrodipicolinate + L-glutamate + H2O + H(+). It functions in the pathway amino-acid biosynthesis; L-lysine biosynthesis via DAP pathway; LL-2,6-diaminopimelate from (S)-tetrahydrodipicolinate (aminotransferase route): step 1/1. Functionally, involved in the synthesis of meso-diaminopimelate (m-DAP or DL-DAP), required for both lysine and peptidoglycan biosynthesis. Catalyzes the direct conversion of tetrahydrodipicolinate to LL-diaminopimelate. This chain is LL-diaminopimelate aminotransferase, found in Nitratidesulfovibrio vulgaris (strain DP4) (Desulfovibrio vulgaris).